The chain runs to 101 residues: Chaperone modulatory protein CbpM (101 aa).

It belongs to the CbpM family.

In terms of biological role, interacts with CbpA and inhibits both the DnaJ-like co-chaperone activity and the DNA binding activity of CbpA. Together with CbpA, modulates the activity of the DnaK chaperone system. Does not inhibit the co-chaperone activity of DnaJ. This chain is Chaperone modulatory protein CbpM, found in Escherichia coli (strain K12 / MC4100 / BW2952).